The chain runs to 142 residues: Large ribosomal subunit protein uL11 (142 aa).

It belongs to the universal ribosomal protein uL11 family. As to quaternary structure, part of the ribosomal stalk of the 50S ribosomal subunit. Interacts with L10 and the large rRNA to form the base of the stalk. L10 forms an elongated spine to which L12 dimers bind in a sequential fashion forming a multimeric L10(L12)X complex. One or more lysine residues are methylated.

Its function is as follows. Forms part of the ribosomal stalk which helps the ribosome interact with GTP-bound translation factors. This Mycolicibacterium gilvum (strain PYR-GCK) (Mycobacterium gilvum (strain PYR-GCK)) protein is Large ribosomal subunit protein uL11.